The chain runs to 340 residues: Glycerol-3-phosphate dehydrogenase [NAD(P)+] (340 aa).

Positions 11, 12, 33, and 106 each coordinate NADPH. 3 residues coordinate sn-glycerol 3-phosphate: lysine 106, glycine 137, and serine 139. Position 141 (alanine 141) interacts with NADPH. Sn-glycerol 3-phosphate contacts are provided by lysine 192, aspartate 245, serine 255, arginine 256, and asparagine 257. Lysine 192 acts as the Proton acceptor in catalysis. NADPH is bound at residue arginine 256. Positions 280 and 282 each coordinate NADPH.

The protein belongs to the NAD-dependent glycerol-3-phosphate dehydrogenase family.

It localises to the cytoplasm. It catalyses the reaction sn-glycerol 3-phosphate + NAD(+) = dihydroxyacetone phosphate + NADH + H(+). The catalysed reaction is sn-glycerol 3-phosphate + NADP(+) = dihydroxyacetone phosphate + NADPH + H(+). It participates in membrane lipid metabolism; glycerophospholipid metabolism. Catalyzes the reduction of the glycolytic intermediate dihydroxyacetone phosphate (DHAP) to sn-glycerol 3-phosphate (G3P), the key precursor for phospholipid synthesis. The protein is Glycerol-3-phosphate dehydrogenase [NAD(P)+] of Bacillus anthracis (strain A0248).